A 169-amino-acid chain; its full sequence is MLYTLLLVPSLFLLVMPVPSQGWSRPLWYQVGLDLQPWGCQPNSPDIWGCQPNSLDSCKNSLGCPGYWLGLGGNRIYPVAGVTITTTMLLVVSRVIVHRWRAKVAKGQLPAVTSSSGKHWKEQPTVSDRTLVLRVLHMLDAILLHIEGHLQGLASQQQIQIKGSPPQSG.

Positions 1–22 (MLYTLLLVPSLFLLVMPVPSQG) are cleaved as a signal peptide. At 23–75 (WSRPLWYQVGLDLQPWGCQPNSPDIWGCQPNSLDSCKNSLGCPGYWLGLGGNR) the chain is on the extracellular side. Residues 76–96 (IYPVAGVTITTTMLLVVSRVI) form a helical membrane-spanning segment. The Cytoplasmic portion of the chain corresponds to 97–169 (VHRWRAKVAK…QIKGSPPQSG (73 aa)).

It is found in the membrane. In Mus musculus (Mouse), this protein is Transmembrane protein 89 (Tmem89).